Consider the following 512-residue polypeptide: Serine--tRNA ligase, cytoplasmic (512 aa).

An N-acetylmethionine modification is found at Met1. The segment at 9-61 is interaction with tRNA; it reads RVDKGGDPALIRETQEKRFKDPGLVDQLVKADSEWRRCRFRADNLNKLKNLCS. A Phosphoserine modification is found at Ser241. Residues Thr271 and Arg302 each coordinate L-serine. ATP contacts are provided by residues 302 to 304 and 318 to 321; these read RQE and VHQF. Lys323 carries the N6-acetyllysine modification. Glu325 contacts L-serine. Residue 391–394 coordinates ATP; that stretch reads ELVS. Residue Asn427 participates in L-serine binding. The disordered stretch occupies residues 470–512; that stretch reads FVKPAPIDQEPSKKQKKQHEGSKKKAKEVPLENQLQSMEVTEA. A compositionally biased stretch (basic and acidic residues) spans 479–499; that stretch reads EPSKKQKKQHEGSKKKAKEVP. Positions 482 to 494 match the Nuclear localization signal motif; it reads KKQKKQHEGSKKK. The segment covering 502 to 512 has biased composition (polar residues); sequence NQLQSMEVTEA. Position 506 is a phosphoserine (Ser506).

This sequence belongs to the class-II aminoacyl-tRNA synthetase family. Type-1 seryl-tRNA synthetase subfamily. As to quaternary structure, homodimer. The tRNA molecule may bind across the dimer. Interacts with SIRT2. Interacts with METTL6; interaction is required for the tRNA N(3)-methylcytidine methyltransferase activity of METTL6.

The protein localises to the cytoplasm. It is found in the nucleus. It carries out the reaction tRNA(Ser) + L-serine + ATP = L-seryl-tRNA(Ser) + AMP + diphosphate + H(+). The catalysed reaction is tRNA(Sec) + L-serine + ATP = L-seryl-tRNA(Sec) + AMP + diphosphate + H(+). Its pathway is aminoacyl-tRNA biosynthesis; selenocysteinyl-tRNA(Sec) biosynthesis; L-seryl-tRNA(Sec) from L-serine and tRNA(Sec): step 1/1. Its function is as follows. Catalyzes the attachment of serine to tRNA(Ser) in a two-step reaction: serine is first activated by ATP to form Ser-AMP and then transferred to the acceptor end of tRNA(Ser). Is probably also able to aminoacylate tRNA(Sec) with serine, to form the misacylated tRNA L-seryl-tRNA(Sec), which will be further converted into selenocysteinyl-tRNA(Sec). In the nucleus, binds to the VEGFA core promoter and prevents MYC binding and transcriptional activation by MYC. Recruits SIRT2 to the VEGFA promoter, promoting deacetylation of histone H4 at 'Lys-16' (H4K16). Thereby, inhibits the production of VEGFA and sprouting angiogenesis mediated by VEGFA. The chain is Serine--tRNA ligase, cytoplasmic (Sars1) from Mus musculus (Mouse).